The chain runs to 435 residues: ATP-dependent RNA helicase RhlB (435 aa).

The Q motif motif lies at 9–37 (QKFADLGLNPQVVEGLEKKGFEFCTPIQA). The 180-residue stretch at 40–219 (LPVLLSGQDI…FEHMHNPEHV (180 aa)) folds into the Helicase ATP-binding domain. Position 53-60 (53-60 (AQTGTGKT)) interacts with ATP. Residues 165-168 (DEAD) carry the DEAD box motif. The Helicase C-terminal domain occupies 245 to 390 (ALLQTLIEEE…VSDYDSSALI (146 aa)). Residues 395–435 (APVRTPSARNQQRRTNTGGARSGDRKSNNRRPRQPRQHKEA) form a disordered region. The span at 401-413 (SARNQQRRTNTGG) shows a compositional bias: polar residues. Over residues 422-435 (NNRRPRQPRQHKEA) the composition is skewed to basic residues.

It belongs to the DEAD box helicase family. RhlB subfamily. In terms of assembly, component of the RNA degradosome, which is a multiprotein complex involved in RNA processing and mRNA degradation.

It localises to the cytoplasm. The catalysed reaction is ATP + H2O = ADP + phosphate + H(+). DEAD-box RNA helicase involved in RNA degradation. Has RNA-dependent ATPase activity and unwinds double-stranded RNA. In Vibrio vulnificus (strain CMCP6), this protein is ATP-dependent RNA helicase RhlB.